A 964-amino-acid polypeptide reads, in one-letter code: Activator of stress genes 1 (964 aa).

The zn(2)-C6 fungal-type DNA-binding region spans 21-47 (CDECRKKKVKCDGQQPCIHCTVYSYEC). Residues 104–125 (ASTIPASNNPSKPRKYKTKSTR) form a disordered region. Ser166 carries the phosphoserine; by ATM or ATR modification. Ser186 is modified (phosphoserine). 3 stretches are compositionally biased toward polar residues: residues 190 to 201 (PVLSSNSKNSTP), 209 to 225 (KSDS…DSVD), and 733 to 759 (NNTP…TNMS). 3 disordered regions span residues 190–225 (PVLS…DSVD), 733–764 (NNTP…ERDP), and 800–900 (NSAF…SPSY). Low complexity predominate over residues 800 to 896 (NSAFDFSSSK…NDFGIKIDNN (97 aa)). A Phosphoserine modification is found at Ser963.

This sequence belongs to the ASG1 family.

The protein resides in the nucleus. Probable transcription factor involved in the stress response. The sequence is that of Activator of stress genes 1 (ASG1) from Saccharomyces cerevisiae (strain ATCC 204508 / S288c) (Baker's yeast).